We begin with the raw amino-acid sequence, 613 residues long: Ribosome-associated molecular chaperone SSB1 (613 aa).

The tract at residues 1–391 (MADGVFQGAI…ILTGQSTNDD (391 aa)) is nucleotide binding domain (NBD). Residues 16-18 (TTY), lysine 73, 205-207 (GGT), 271-278 (ERAKRSLS), and glycine 342 each bind ATP. The tract at residues 392–402 (TKDLLLLDVIP) is inter-domain linker. The segment at 403-613 (LSLGVAMQGN…RAVTKGMATR (211 aa)) is substrate binding domain (SBD). A lid domain (SBDalpha) region spans residues 516 to 612 (TEEIEKMISD…KRAVTKGMAT (97 aa)). The short motif at 574-582 (IEAALSDAL) is the Nuclear export signal element.

It belongs to the heat shock protein 70 family. Ssb-type Hsp70 subfamily. In terms of assembly, binds to ribosomes. Binds close to the ribosomal tunnel exit via contacts with both ribosomal proteins and rRNA. Directly interacts with nascent polypeptides. This interaction is dependent on the ribosome-associated complex (RAC). Interacts with SSE1. Interacts with FES1.

The protein localises to the cytoplasm. The catalysed reaction is ATP + H2O = ADP + phosphate + H(+). Ribosome-bound, Hsp70-type chaperone that assists in the cotranslational folding of newly synthesized proteins in the cytosol. Stimulates folding by interacting with nascent chains, binding to short, largely hydrophobic sequences exposed by unfolded proteins, thereby stabilizing longer, more slowly translated, and aggregation-prone nascent polypeptides and domains that cannot fold stably until fully synthesized. The Hsp70-protein substrate interaction depends on ATP-binding and on allosteric regulation between the NBD and the SBD. The ATP-bound state is characterized by a fast exchange rate of substrate (low affinity state), while in the ADP-bound state exchange is much slower (high affinity state). During the Hsp70 cycle, the chaperone switches between the ATP-bound state (open conformation) and the ADP-bound state (closed conformation) by major conformational rearrangements involving mainly the lid domain. Ssb cooperates with a specific Hsp40/Hsp70 co-chaperone termed the ribosome-associated complex (RAC), which stimulates the ATPase activity of the ribosome-associated pool of Ssbs and switches it to the high affinity substrate binding state. Hsp110 chaperone SSE1 and FES1 act as nucleotide exchange factors that cause substrate release. In Candida albicans (strain WO-1) (Yeast), this protein is Ribosome-associated molecular chaperone SSB1 (SSB1).